Reading from the N-terminus, the 92-residue chain is Small ribosomal subunit protein uS19 (92 aa).

This sequence belongs to the universal ribosomal protein uS19 family.

Functionally, protein S19 forms a complex with S13 that binds strongly to the 16S ribosomal RNA. The chain is Small ribosomal subunit protein uS19 from Mesorhizobium japonicum (strain LMG 29417 / CECT 9101 / MAFF 303099) (Mesorhizobium loti (strain MAFF 303099)).